The sequence spans 185 residues: Urease accessory protein UreE (185 aa).

The segment at 153–185 is disordered; that stretch reads LRANSAQGHGHSHSHSHDHHGYHHHGDGHWHKH. The span at 162-175 shows a compositional bias: basic residues; sequence GHSHSHSHDHHGYH. Over residues 176 to 185 the composition is skewed to basic and acidic residues; it reads HHGDGHWHKH.

Belongs to the UreE family.

The protein resides in the cytoplasm. In terms of biological role, involved in urease metallocenter assembly. Binds nickel. Probably functions as a nickel donor during metallocenter assembly. The protein is Urease accessory protein UreE of Haemophilus influenzae (strain PittEE).